A 276-amino-acid chain; its full sequence is Mitochondrial outer membrane protein porin of 34 kDa (276 aa).

The protein belongs to the eukaryotic mitochondrial porin (TC 1.B.8.1) family.

The protein resides in the mitochondrion outer membrane. Forms a channel through the cell membrane that allows diffusion of small hydrophilic molecules. The channel adopts an open conformation at low or zero membrane potential and a closed conformation at potentials above 30-40 mV. The open state has a weak anion selectivity whereas the closed state is cation-selective. In Solanum tuberosum (Potato), this protein is Mitochondrial outer membrane protein porin of 34 kDa.